The chain runs to 504 residues: Tegument protein VP16 homolog (504 aa).

Disordered regions lie at residues E354–R381, A395–R421, and R435–F486. A compositionally biased stretch (low complexity) spans R361–R378. A compositionally biased stretch (low complexity) spans P447 to S460.

The protein belongs to the herpesviridae tegument protein VP16 protein family. As to quaternary structure, associates with the VP16-induced complex; binding to host HCFC1 activates VP16 for association with the octamer motif-binding host protein POU2F1, to form a multiprotein-DNA complex responsible for activating transcription of the viral immediate early genes.

The protein resides in the virion tegument. It localises to the host nucleus. Its function is as follows. Transcriptional activator of immediate-early (IE) gene products (alpha genes). Acts as a key activator of lytic infection by initiating the lytic program through the assembly of the transcriptional regulatory VP16-induced complex composed of VP16 and two cellular factors, HCFC1 and POU2F1. VP16-induced complex represents a regulatory switch: when it is on, it promotes IE-gene expression and thus lytic infection, and when it is off, it limits IE-gene transcription favoring latent infection. May play a role in the aggregation of tegument proteins around nucleocapsids during virus morphogenesis. This Bos taurus (Bovine) protein is Tegument protein VP16 homolog.